The chain runs to 642 residues: tRNA uridine 5-carboxymethylaminomethyl modification enzyme MnmG (642 aa).

FAD contacts are provided by residues 12-17 (GAGHAG), valine 124, and serine 179. Position 272-286 (272-286 (GPRYCPSIEDKITRF)) interacts with NAD(+). Glutamine 369 contributes to the FAD binding site.

This sequence belongs to the MnmG family. In terms of assembly, homodimer. Heterotetramer of two MnmE and two MnmG subunits. It depends on FAD as a cofactor.

The protein localises to the cytoplasm. In terms of biological role, NAD-binding protein involved in the addition of a carboxymethylaminomethyl (cmnm) group at the wobble position (U34) of certain tRNAs, forming tRNA-cmnm(5)s(2)U34. This Bdellovibrio bacteriovorus (strain ATCC 15356 / DSM 50701 / NCIMB 9529 / HD100) protein is tRNA uridine 5-carboxymethylaminomethyl modification enzyme MnmG.